We begin with the raw amino-acid sequence, 448 residues long: Pentatricopeptide repeat-containing protein At1g80550, mitochondrial (448 aa).

The N-terminal 21 residues, M1–L21, are a transit peptide targeting the mitochondrion. 10 PPR repeats span residues T80–N110, N116–F146, D150–V186, N188–K222, D223–L257, D258–P292, N293–P327, T331–P359, K360–P394, and D395–P429.

It belongs to the PPR family. P subfamily.

The protein localises to the mitochondrion. This chain is Pentatricopeptide repeat-containing protein At1g80550, mitochondrial, found in Arabidopsis thaliana (Mouse-ear cress).